Here is a 251-residue protein sequence, read N- to C-terminus: CDP-diacylglycerol pyrophosphatase (251 aa).

The helical transmembrane segment at 4 to 24 (AGLLFLVMIVIAVVAAGIGYW) threads the bilayer.

Belongs to the Cdh family.

It localises to the cell inner membrane. The enzyme catalyses a CDP-1,2-diacyl-sn-glycerol + H2O = a 1,2-diacyl-sn-glycero-3-phosphate + CMP + 2 H(+). Its pathway is phospholipid metabolism; CDP-diacylglycerol degradation; phosphatidate from CDP-diacylglycerol: step 1/1. The sequence is that of CDP-diacylglycerol pyrophosphatase from Escherichia coli O127:H6 (strain E2348/69 / EPEC).